We begin with the raw amino-acid sequence, 111 residues long: Cornifelin (111 aa).

This sequence belongs to the cornifelin family. In terms of assembly, directly or indirectly cross-linked to CE proteins loricin and involucrin (IVL).

It localises to the cytoplasm. In terms of biological role, part of the insoluble cornified cell envelope (CE) of stratified squamous epithelia. The sequence is that of Cornifelin (Cnfn) from Mus musculus (Mouse).